The following is a 219-amino-acid chain: Histone H1.4 (219 aa).

Positions 1-15 are enriched in low complexity; sequence MSETAPAAPAAPAPA. The disordered stretch occupies residues 1–41; the sequence is MSETAPAAPAAPAPAEKTPVKKKARKAAGGAKRKTSGPPVS. S2 is subject to N-acetylserine. Residue S2 is modified to Phosphoserine. At K17 the chain carries N6-acetyllysine. A Phosphothreonine modification is found at T18. Residues 20–35 show a composition bias toward basic residues; sequence VKKKARKAAGGAKRKT. K26 carries the post-translational modification N6-acetyllysine; alternate. The residue at position 26 (K26) is an N6-methyllysine; alternate. N6-(beta-hydroxybutyryl)lysine; alternate is present on K34. Residue K34 is modified to N6-succinyllysine; alternate. Residue S36 is modified to Phosphoserine. In terms of domain architecture, H15 spans 36–109; sequence SGPPVSELIT…GASGSFKLNK (74 aa). The residue at position 52 (K52) is an N6-(beta-hydroxybutyryl)lysine. R54 bears the Citrulline mark. N6-(beta-hydroxybutyryl)lysine is present on residues K64, K85, K90, and K106. Residues 92–219 are disordered; it reads TLVQTKGTGA…KPKKTAAKKK (128 aa). Basic residues predominate over residues 119-140; sequence KAKRAGAAKAKKPAGAAKKPKK. A Phosphothreonine modification is found at T146. 2 stretches are compositionally biased toward basic residues: residues 149 to 160 and 168 to 185; these read KSTKKTPKKAKK and KKAK…KKAP. S150 is subject to ADP-ribosylserine. Position 187 is a phosphoserine (S187). Residues 192-219 show a composition bias toward basic residues; sequence KTVKPKAAKPKTSKPKAAKPKKTAAKKK.

This sequence belongs to the histone H1/H5 family. Citrullination at Arg-54 (H1R54ci) by PADI4 takes place within the DNA-binding site of H1 and results in its displacement from chromatin and global chromatin decondensation, thereby promoting pluripotency and stem cell maintenance. In terms of processing, ADP-ribosylated on Ser-55, Ser-113 and Ser-150 in response to DNA damage. Post-translationally, H1 histones are progressively phosphorylated during the cell cycle, becoming maximally phosphorylated during late G2 phase and M phase, and being dephosphorylated sharply thereafter. Acetylated at Lys-26. Deacetylated at Lys-26 by SIRT1. In terms of processing, hydroxybutyrylation of histones is induced by starvation.

It is found in the nucleus. Its subcellular location is the chromosome. Histone H1 protein binds to linker DNA between nucleosomes forming the macromolecular structure known as the chromatin fiber. Histones H1 are necessary for the condensation of nucleosome chains into higher-order structured fibers. Also acts as a regulator of individual gene transcription through chromatin remodeling, nucleosome spacing and DNA methylation. The sequence is that of Histone H1.4 from Mus musculus (Mouse).